We begin with the raw amino-acid sequence, 610 residues long: MNNNTNSNHNDIAPEATITQNTTTSVSNDELQHITNNNNVNVQSYVGPTDSVESSSNTADEENEINSFNAQNVKDYEANVGGELPPDDELSRIESNTELSRRATRSIMNTESLLRTASQSSKPLPPMGGGKEYPPMLGSRDPYVVAFDGPDDPDHPHNYPTWKKILYCASVGLAALSVSMGSAMFSQASADIMQIYHIGWTPATLTTSLFVFGFASGPVIYGPLSELFGRKLVMVPSCLGYVCFSFAVATAKDIQTIMICRFFAGFIGAAPLVVAPAVMADMFNNRYRGTAIAIFSMLLFGGPMLAPILGAFTVKNSALGWRWTSYFCGIIGSLALFMNTFLLQETHHPLILTRRAEELRRRTGNWGIYAPHEELKLSMKEIVENNIARPLKMLFTEPILFLVSLYNAFIYGMLYLFLTAIPLIFLGEYHFVQGVAELPYLAMLIGILIGGGMIMLFEKRYIKAMEDNGGKIIPEKRLEPMMVGGFTFVIGIFWLGWTGNYPQHVHWIVPVIGAAFVGNGLMLIFLPCFNYIIDCYLLYAATALAGNTFIRSAFGAVFPLFARQMFTNLTIKWASTLLGCIGILLLPMPFVFYYYGKSLRHKSKFAFVLE.

2 N-linked (GlcNAc...) asparagine glycosylation sites follow: asparagine 3 and asparagine 21. Residues 47 to 58 (GPTDSVESSSNT) are compositionally biased toward polar residues. The segment at 47 to 74 (GPTDSVESSSNTADEENEINSFNAQNVK) is disordered. 11 helical membrane passes run 165-185 (ILYC…SAMF), 209-229 (LFVF…ELFG), 231-251 (KLVM…VATA), 262-282 (FFAG…MADM), 292-312 (IAIF…LGAF), 323-343 (WTSY…TFLL), 408-428 (AFIY…FLGE), 437-457 (ELPY…IMLF), 478-498 (LEPM…LGWT), 507-527 (WIVP…IFLP), and 530-550 (NYII…NTFI). Asparagine 568 carries N-linked (GlcNAc...) asparagine glycosylation. Residues 573-593 (WASTLLGCIGILLLPMPFVFY) traverse the membrane as a helical segment.

This sequence belongs to the major facilitator superfamily. DHA1 family. Polyamines/proton antiporter (TC 2.A.1.2.16) subfamily.

It localises to the cell membrane. Major facilitator superfamily transporter that mediates resistance to structurally and functionally unrelated compounds including cycloheximide but also azoles such as fuconazole, ketoconazole and itraconazole. Also mediates efflux of histatin 5, a salivary human antimicrobial peptide, and is responsible for reduction of its toxicity in C.albicans. This chain is Major facilitator superfamily multidrug transporter FLU1, found in Candida albicans (strain SC5314 / ATCC MYA-2876) (Yeast).